The primary structure comprises 447 residues: Adenylosuccinate synthetase (447 aa).

Residues 12-18 (GDEGKGK) and 40-42 (GHT) each bind GTP. Residue D13 is the Proton acceptor of the active site. Mg(2+)-binding residues include D13 and G40. IMP is bound by residues 13 to 16 (DEGK), 38 to 41 (NAGH), T128, R142, Q223, T238, and R302. H41 acts as the Proton donor in catalysis. Residue 298–304 (TTTGRRR) participates in substrate binding. GTP is bound by residues R304, 330 to 332 (KLD), and 412 to 414 (SLG).

It belongs to the adenylosuccinate synthetase family. As to quaternary structure, homodimer. The cofactor is Mg(2+).

It localises to the cytoplasm. It catalyses the reaction IMP + L-aspartate + GTP = N(6)-(1,2-dicarboxyethyl)-AMP + GDP + phosphate + 2 H(+). Its pathway is purine metabolism; AMP biosynthesis via de novo pathway; AMP from IMP: step 1/2. Its function is as follows. Plays an important role in the de novo pathway of purine nucleotide biosynthesis. Catalyzes the first committed step in the biosynthesis of AMP from IMP. This Microcystis aeruginosa (strain NIES-843 / IAM M-2473) protein is Adenylosuccinate synthetase.